A 345-amino-acid chain; its full sequence is UDP-3-O-acylglucosamine N-acyltransferase 3 (345 aa).

Histidine 236 serves as the catalytic Proton acceptor.

This sequence belongs to the transferase hexapeptide repeat family. LpxD subfamily. In terms of assembly, homotrimer.

It carries out the reaction a UDP-3-O-[(3R)-3-hydroxyacyl]-alpha-D-glucosamine + a (3R)-hydroxyacyl-[ACP] = a UDP-2-N,3-O-bis[(3R)-3-hydroxyacyl]-alpha-D-glucosamine + holo-[ACP] + H(+). It participates in bacterial outer membrane biogenesis; LPS lipid A biosynthesis. Functionally, catalyzes the N-acylation of UDP-3-O-acylglucosamine using 3-hydroxyacyl-ACP as the acyl donor. Is involved in the biosynthesis of lipid A, a phosphorylated glycolipid that anchors the lipopolysaccharide to the outer membrane of the cell. The chain is UDP-3-O-acylglucosamine N-acyltransferase 3 from Gloeobacter violaceus (strain ATCC 29082 / PCC 7421).